We begin with the raw amino-acid sequence, 343 residues long: Cytoplasmic tRNA 2-thiolation protein 1 (343 aa).

This sequence belongs to the TtcA family. CTU1/NCS6/ATPBD3 subfamily.

Its subcellular location is the cytoplasm. Its pathway is tRNA modification; 5-methoxycarbonylmethyl-2-thiouridine-tRNA biosynthesis. Its function is as follows. Plays a central role in 2-thiolation of mcm(5)S(2)U at tRNA wobble positions of tRNA(Lys), tRNA(Glu) and tRNA(Gln). Directly binds tRNAs and probably acts by catalyzing adenylation of tRNAs, an intermediate required for 2-thiolation. It is unclear whether it acts as a sulfurtransferase that transfers sulfur from thiocarboxylated URM1 onto the uridine of tRNAs at wobble position. The polypeptide is Cytoplasmic tRNA 2-thiolation protein 1 (Drosophila sechellia (Fruit fly)).